The sequence spans 463 residues: Chromosomal replication initiator protein DnaA (463 aa).

Residues 1–83 (MSLSLWQQCL…LRFEVGSKPI (83 aa)) are domain I, interacts with DnaA modulators. The segment at 83–126 (IVPVAVSSAASSGASVPPAAVRASSLARPSWERVTAQPELSYRS) is domain II. The domain III, AAA+ region stretch occupies residues 127-343 (NVNPKHTFDN…GALNRVIANA (217 aa)). Residues glycine 171, glycine 173, lysine 174, and threonine 175 each contribute to the ATP site. Positions 344–463 (NFTGRAITID…FSNLIRTLSS (120 aa)) are domain IV, binds dsDNA.

Belongs to the DnaA family. As to quaternary structure, oligomerizes as a right-handed, spiral filament on DNA at oriC.

It localises to the cytoplasm. Functionally, plays an essential role in the initiation and regulation of chromosomal replication. ATP-DnaA binds to the origin of replication (oriC) to initiate formation of the DNA replication initiation complex once per cell cycle. Binds the DnaA box (a 9 base pair repeat at the origin) and separates the double-stranded (ds)DNA. Forms a right-handed helical filament on oriC DNA; dsDNA binds to the exterior of the filament while single-stranded (ss)DNA is stabiized in the filament's interior. The ATP-DnaA-oriC complex binds and stabilizes one strand of the AT-rich DNA unwinding element (DUE), permitting loading of DNA polymerase. After initiation quickly degrades to an ADP-DnaA complex that is not apt for DNA replication. Binds acidic phospholipids. This Edwardsiella ictaluri (strain 93-146) protein is Chromosomal replication initiator protein DnaA.